A 105-amino-acid chain; its full sequence is MIASKFGIGQQVRHKLLGYLGVIIDIDPEYSLEKPTLDEITKNDTLRKSPWYHVVMEDEEGKPMHTYLAEVQLGYENILTHPEQTTLDELSESIRLQLQTPRLRN.

Belongs to the HspQ family.

It is found in the cytoplasm. Functionally, involved in the degradation of certain denaturated proteins, including DnaA, during heat shock stress. This Blochmanniella pennsylvanica (strain BPEN) protein is Heat shock protein HspQ.